The sequence spans 213 residues: Large ribosomal subunit protein uL1 (213 aa).

It belongs to the universal ribosomal protein uL1 family. As to quaternary structure, part of the 50S ribosomal subunit.

Binds directly to 23S rRNA. Probably involved in E site tRNA release. Its function is as follows. Protein L1 is also a translational repressor protein, it controls the translation of its operon by binding to its mRNA. This Nanoarchaeum equitans (strain Kin4-M) protein is Large ribosomal subunit protein uL1.